The chain runs to 239 residues: tRNA (guanine-N(7)-)-methyltransferase (239 aa).

S-adenosyl-L-methionine is bound by residues G64, 87–88 (EI), 120–121 (NA), and L140. The active site involves D143. S-adenosyl-L-methionine is bound at residue 218-220 (SEE).

It belongs to the class I-like SAM-binding methyltransferase superfamily. TrmB family.

The protein resides in the nucleus. It catalyses the reaction guanosine(46) in tRNA + S-adenosyl-L-methionine = N(7)-methylguanosine(46) in tRNA + S-adenosyl-L-homocysteine. The protein operates within tRNA modification; N(7)-methylguanine-tRNA biosynthesis. Functionally, catalyzes the formation of N(7)-methylguanine at position 46 (m7G46) in tRNA. The polypeptide is tRNA (guanine-N(7)-)-methyltransferase (Culex quinquefasciatus (Southern house mosquito)).